A 230-amino-acid polypeptide reads, in one-letter code: Uracil-DNA glycosylase (230 aa).

Aspartate 70 serves as the catalytic Proton acceptor.

It belongs to the uracil-DNA glycosylase (UDG) superfamily. UNG family.

It is found in the cytoplasm. The enzyme catalyses Hydrolyzes single-stranded DNA or mismatched double-stranded DNA and polynucleotides, releasing free uracil.. Its function is as follows. Excises uracil residues from the DNA which can arise as a result of misincorporation of dUMP residues by DNA polymerase or due to deamination of cytosine. This Pseudomonas fluorescens (strain ATCC BAA-477 / NRRL B-23932 / Pf-5) protein is Uracil-DNA glycosylase.